The sequence spans 315 residues: Ribosomal RNA small subunit methyltransferase H (315 aa).

S-adenosyl-L-methionine is bound by residues 37–39 (GGH), Asp57, Phe83, Asp105, and Gln112.

Belongs to the methyltransferase superfamily. RsmH family.

The protein resides in the cytoplasm. It catalyses the reaction cytidine(1402) in 16S rRNA + S-adenosyl-L-methionine = N(4)-methylcytidine(1402) in 16S rRNA + S-adenosyl-L-homocysteine + H(+). Its function is as follows. Specifically methylates the N4 position of cytidine in position 1402 (C1402) of 16S rRNA. This Pseudomonas entomophila (strain L48) protein is Ribosomal RNA small subunit methyltransferase H.